A 686-amino-acid chain; its full sequence is UvrABC system protein C (686 aa).

A compositionally biased stretch (basic and acidic residues) spans 1-14 (MVHDSTDDPDDTRV). Residues 1-48 (MVHDSTDDPDDTRVRKSRRGTALDAPPQETAPPDLDPATTGGDDEDDA) are disordered. The GIY-YIG domain maps to 81-160 (TSPGVYRMLN…IKQLRPRFNV (80 aa)). The 36-residue stretch at 270 to 305 (HAVKQELAGEMEKAANELEFETAALYRDRLAALSAI) folds into the UVR domain.

The protein belongs to the UvrC family. In terms of assembly, interacts with UvrB in an incision complex.

It localises to the cytoplasm. Its function is as follows. The UvrABC repair system catalyzes the recognition and processing of DNA lesions. UvrC both incises the 5' and 3' sides of the lesion. The N-terminal half is responsible for the 3' incision and the C-terminal half is responsible for the 5' incision. The protein is UvrABC system protein C of Bradyrhizobium diazoefficiens (strain JCM 10833 / BCRC 13528 / IAM 13628 / NBRC 14792 / USDA 110).